We begin with the raw amino-acid sequence, 169 residues long: Glycine-rich RNA-binding protein GRP2A (169 aa).

The 79-residue stretch at 8–86 (YRCFVGGLAW…RSITVNEAQS (79 aa)) folds into the RRM domain. Disordered regions lie at residues 69 to 100 (MNGQ…GGGG) and 125 to 169 (YSGG…GGGW). A compositionally biased stretch (gly residues) spans 89 to 100 (SGAGGGGRGGGG).

In terms of tissue distribution, predominantly expressed in meristematic and growing tissue.

The protein resides in the nucleus. In terms of biological role, may play a general role in circadian phenomena associated with meristematic tissue. This is Glycine-rich RNA-binding protein GRP2A from Sinapis alba (White mustard).